The primary structure comprises 232 residues: Recombination protein RecR (232 aa).

The segment at 92–107 (CQVCFHLSAEPVCDIC) adopts a C4-type zinc-finger fold. The region spanning 115–209 (SVICVVSDPR…KVTRIAFGLP (95 aa)) is the Toprim domain.

This sequence belongs to the RecR family.

In terms of biological role, may play a role in DNA repair. It seems to be involved in an RecBC-independent recombinational process of DNA repair. It may act with RecF and RecO. The sequence is that of Recombination protein RecR from Synechocystis sp. (strain ATCC 27184 / PCC 6803 / Kazusa).